The chain runs to 314 residues: 4-hydroxy-3-methylbut-2-enyl diphosphate reductase (314 aa).

Cysteine 12 is a [4Fe-4S] cluster binding site. (2E)-4-hydroxy-3-methylbut-2-enyl diphosphate contacts are provided by histidine 43 and histidine 81. The dimethylallyl diphosphate site is built by histidine 43 and histidine 81. Isopentenyl diphosphate-binding residues include histidine 43 and histidine 81. Cysteine 103 is a [4Fe-4S] cluster binding site. Position 131 (histidine 131) interacts with (2E)-4-hydroxy-3-methylbut-2-enyl diphosphate. Histidine 131 is a dimethylallyl diphosphate binding site. Histidine 131 serves as a coordination point for isopentenyl diphosphate. The active-site Proton donor is glutamate 133. Threonine 170 serves as a coordination point for (2E)-4-hydroxy-3-methylbut-2-enyl diphosphate. Cysteine 198 lines the [4Fe-4S] cluster pocket. Serine 226, asparagine 228, and serine 271 together coordinate (2E)-4-hydroxy-3-methylbut-2-enyl diphosphate. Positions 226, 228, and 271 each coordinate dimethylallyl diphosphate. 3 residues coordinate isopentenyl diphosphate: serine 226, asparagine 228, and serine 271.

The protein belongs to the IspH family. The cofactor is [4Fe-4S] cluster.

The catalysed reaction is isopentenyl diphosphate + 2 oxidized [2Fe-2S]-[ferredoxin] + H2O = (2E)-4-hydroxy-3-methylbut-2-enyl diphosphate + 2 reduced [2Fe-2S]-[ferredoxin] + 2 H(+). The enzyme catalyses dimethylallyl diphosphate + 2 oxidized [2Fe-2S]-[ferredoxin] + H2O = (2E)-4-hydroxy-3-methylbut-2-enyl diphosphate + 2 reduced [2Fe-2S]-[ferredoxin] + 2 H(+). The protein operates within isoprenoid biosynthesis; dimethylallyl diphosphate biosynthesis; dimethylallyl diphosphate from (2E)-4-hydroxy-3-methylbutenyl diphosphate: step 1/1. Its pathway is isoprenoid biosynthesis; isopentenyl diphosphate biosynthesis via DXP pathway; isopentenyl diphosphate from 1-deoxy-D-xylulose 5-phosphate: step 6/6. Catalyzes the conversion of 1-hydroxy-2-methyl-2-(E)-butenyl 4-diphosphate (HMBPP) into a mixture of isopentenyl diphosphate (IPP) and dimethylallyl diphosphate (DMAPP). Acts in the terminal step of the DOXP/MEP pathway for isoprenoid precursor biosynthesis. In Bacillus pumilus (strain SAFR-032), this protein is 4-hydroxy-3-methylbut-2-enyl diphosphate reductase.